The chain runs to 343 residues: General stress protein 30 (343 aa).

This sequence belongs to the polysaccharide pyruvyl transferase family.

In Bacillus subtilis (strain 168), this protein is General stress protein 30 (yxaB).